A 226-amino-acid chain; its full sequence is Clarin-3 (226 aa).

The helical transmembrane segment at 8–28 (LMFLSGFLTSLGSVVVICSIL) threads the bilayer. N-linked (GlcNAc...) asparagine glycosylation occurs at N46. The next 3 helical transmembrane spans lie at 92 to 112 (VVIL…VFTF), 128 to 148 (GVYT…VLFV), and 181 to 201 (FWLT…IIFY).

It belongs to the clarin family.

It is found in the membrane. The polypeptide is Clarin-3 (Clrn3) (Mus musculus (Mouse)).